The following is a 423-amino-acid chain: Peroxisomal membrane protein PMP47A (423 aa).

Solcar repeat units lie at residues 6–120, 142–230, and 239–373; these read YDDL…TGKT, LSVW…LKSF, and ITPV…LLIL. Residues 12 to 32 traverse the membrane as a helical segment; the sequence is AFAGAGGGLLSMTLTYPLVTL. A compositionally biased stretch (basic and acidic residues) spans 43 to 53; that stretch reads KKDQEKEKENS. The tract at residues 43 to 70 is disordered; the sequence is KKDQEKEKENSNEDGSLSPKSSNTSDVS. Positions 55 to 70 are enriched in polar residues; the sequence is EDGSLSPKSSNTSDVS. The next 4 helical transmembrane spans lie at 98–118, 148–168, 204–224, and 245–265; these read SALFGIAVTNFVYYYFYELTG, MAAGAVAGTISRVATNPIWVA, FTGIVPALFLVLNPIIQYTIF, and LLLGAFGKLIATIITYPYITL. The interval 278 to 308 is disordered; that stretch reads SEDVEKERTDSVQSLPEDGSDEDNLKENSAK. A helical transmembrane segment spans residues 353–373; sequence LLQSILNAAFLFYFKEELLIL.

The protein belongs to the mitochondrial carrier (TC 2.A.29) family.

Its subcellular location is the peroxisome membrane. In terms of biological role, may have transport activity. This chain is Peroxisomal membrane protein PMP47A (PMP47A), found in Candida boidinii (Yeast).